The sequence spans 321 residues: MATH domain and coiled-coil domain-containing protein At3g58260 (321 aa).

One can recognise an MATH domain in the interval 6–135 (NNTFTWVIKN…NDEVMVAVAV (130 aa)). Positions 232-283 (KLDWLEKKLDELFEKKKEEADKIRMQNIEEELKDLRQKCSSLEALLKKEKTG) form a coiled coil.

This chain is MATH domain and coiled-coil domain-containing protein At3g58260, found in Arabidopsis thaliana (Mouse-ear cress).